A 1285-amino-acid chain; its full sequence is Transmembrane channel-like protein 1 (1285 aa).

The segment at 1–29 (MQEAARRASLRKEHTPTNEKFGDLSKQDS) is disordered. The Cytoplasmic portion of the chain corresponds to 1 to 164 (MQEAARRASL…KIKRIESHFG (164 aa)). Residues 165-202 (SVVSSYFTFLRWIVFVNIMITLIALVFVVLPETLADSV) form a helical membrane-spanning segment. Residues 203–260 (ANEGRFNRTKTRKQIPANERVHADELAVVWHYDGYLRYSPLFYGYYSDDPFLGNKIKY) lie on the Extracellular side of the membrane. Asn-209 carries an N-linked (GalNAc...) asparagine glycan. The helical transmembrane segment at 261–292 (ALPLAYFMVTLTIFAYSFFAILRKMAANARMS) threads the bilayer. Residues 293–349 (KLSGSKAEQYIFNWKLFTGWDYTIGNSETASNTVMAVVIKLRESIADIKKDAHGKFR) are Cytoplasmic-facing. The helical transmembrane segment at 350-381 (LLQFSLRVFANIIICAMLGFSIYCIIFAVQKS) threads the bilayer. Over 382–388 (QVQDDGN) the chain is Extracellular. Residues 389–416 (LFTKNQVPSVVSTITHVFPMIFDLIGKM) traverse the membrane as a helical segment. Topologically, residues 417–420 (ENYH) are cytoplasmic. The helical transmembrane segment at 421 to 455 (PRTALRAHLGRVLILYTVNYITLIFALFEKMTALR) threads the bilayer. Residues 456 to 667 (DRVNSTSTSS…NHDGHNNDIC (212 aa)) lie on the Extracellular side of the membrane. The disordered stretch occupies residues 458–488 (VNSTSTSSSHRTKRQQGGWNPNMQRPPPYAS). A disulfide bond links Cys-667 and Cys-816. Residues 668 to 705 (WETIIGQEIVKLVTMDLIFTILSILVIDLFRGLWIKYC) form a helical membrane-spanning segment. The segment at 696–720 (LFRGLWIKYCSSWWCWDIETTFPEY) is required for interaction with tmie. Residues 706-724 (SSWWCWDIETTFPEYGEFK) lie on the Cytoplasmic side of the membrane. Residues 725–745 (VAENVLHIINNQGMIWLGLFF) form a helical membrane-spanning segment. The Extracellular portion of the chain corresponds to 746 to 748 (APL). Residues 749-771 (LPAINNIKLIILMYIRGWAVMTC) form a helical membrane-spanning segment. The segment at 766 to 773 (WAVMTCNV) is required for interaction with tmie. Residues 772 to 785 (NVPAREIFRASRSS) are Cytoplasmic-facing. A helical membrane pass occupies residues 786–809 (NFYLGILLIWLLLCTLPVGFVIAS). Residues 810 to 852 (MSPSRSCGPFARYQHFYTVVTREIEKRVDQTVLSYIRHIASPG) lie on the Extracellular side of the membrane. Residues 853-886 (VVIPIILFLILIIYFLFSLVRGLREANTDLQAQL) traverse the membrane as a helical segment. The Cytoplasmic segment spans residues 887–1285 (VHERTEEKKK…DEDDSPRQID (399 aa)). Disordered stretches follow at residues 940 to 962 (ADHA…DDER) and 1114 to 1285 (TIKE…RQID). The segment covering 948–961 (SSEESDINEDEDDE) has biased composition (acidic residues). Basic and acidic residues-rich tracts occupy residues 1121 to 1131 (DPGKSDKKQTS), 1146 to 1156 (DEARALREKMK), and 1167 to 1182 (TVEE…ESEF). The segment covering 1197 to 1208 (TEEENEEEETDS) has biased composition (acidic residues).

This sequence belongs to the TMC family. As to quaternary structure, homodimer. Interacts with calm-1 and tmie to form the MET channel. As to expression, expressed in the ASH polymodal avoidance neurons. Also expressed in other sensory neurons, including the ADF, ASE, ADL, AQR, PQR, URX and PHA cells.

The protein localises to the cell membrane. It catalyses the reaction Na(+)(in) = Na(+)(out). The catalysed reaction is Ca(2+)(in) = Ca(2+)(out). The enzyme catalyses K(+)(in) = K(+)(out). Pore-forming subunit of the mechanotransducer (MET) non-selective cation channel complex. The MET complex is composed of symmetric dimeric MET channels, each channel comprising two copies of pore-forming ion-conducting transmembrane TMC subunits and auxiliary proteins including the transmembrane inner ear protein/tmie, the calcium-binding protein/calm-1 and arrestin domain protein arrd-6. Sodium ions are the most permeable, whereas calcium and potassium have lower indices. Sodium-sensor ion channel that acts specifically in salt taste chemosensation. Required for salt-evoked neuronal activity and behavioral avoidance of high concentrations of NaCl. The chain is Transmembrane channel-like protein 1 (tmc-1) from Caenorhabditis elegans.